Here is a 111-residue protein sequence, read N- to C-terminus: ASFAEAPAGDAKAGEKIFKTKCAZCHTVZKGAGHKQGPNLNGLFGRQSGTTAGYSYSAANKNKAVAWZZBSLYDYLLNPKKYIPGTKMVFPGLKKPZZRADLIAYLKASTA.

Alanine 1 carries the N-acetylalanine modification. Residues cysteine 22, cysteine 25, and histidine 26 each coordinate heme c. Lysine 80 is subject to N6,N6,N6-trimethyllysine. Position 88 (methionine 88) interacts with heme c. Lysine 94 carries the post-translational modification N6,N6,N6-trimethyllysine.

It belongs to the cytochrome c family. Post-translationally, binds 1 heme c group covalently per subunit.

It is found in the mitochondrion intermembrane space. Its function is as follows. Electron carrier protein. The oxidized form of the cytochrome c heme group can accept an electron from the heme group of the cytochrome c1 subunit of cytochrome reductase. Cytochrome c then transfers this electron to the cytochrome oxidase complex, the final protein carrier in the mitochondrial electron-transport chain. In Guizotia abyssinica (Niger), this protein is Cytochrome c.